The following is a 243-amino-acid chain: PF03932 family protein CutC (243 aa).

It belongs to the CutC family.

It localises to the cytoplasm. This Glaesserella parasuis serovar 5 (strain SH0165) (Haemophilus parasuis) protein is PF03932 family protein CutC.